We begin with the raw amino-acid sequence, 284 residues long: Pantothenate synthetase (284 aa).

30 to 37 contacts ATP; that stretch reads MGNLHQGH. The active-site Proton donor is His-37. Position 61 (Gln-61) interacts with (R)-pantoate. Gln-61 is a binding site for beta-alanine. 149–152 is an ATP binding site; the sequence is GQKD. Position 155 (Gln-155) interacts with (R)-pantoate. ATP is bound by residues Val-178 and 186 to 189; that span reads LSSR.

The protein belongs to the pantothenate synthetase family. Homodimer.

The protein resides in the cytoplasm. It carries out the reaction (R)-pantoate + beta-alanine + ATP = (R)-pantothenate + AMP + diphosphate + H(+). The protein operates within cofactor biosynthesis; (R)-pantothenate biosynthesis; (R)-pantothenate from (R)-pantoate and beta-alanine: step 1/1. Its function is as follows. Catalyzes the condensation of pantoate with beta-alanine in an ATP-dependent reaction via a pantoyl-adenylate intermediate. This Aeromonas salmonicida (strain A449) protein is Pantothenate synthetase.